The sequence spans 315 residues: Probable cell division protein WhiA (315 aa).

The H-T-H motif DNA-binding region spans S277–Q311.

The protein belongs to the WhiA family.

In terms of biological role, involved in cell division and chromosome segregation. This Lacticaseibacillus paracasei (strain ATCC 334 / BCRC 17002 / CCUG 31169 / CIP 107868 / KCTC 3260 / NRRL B-441) (Lactobacillus paracasei) protein is Probable cell division protein WhiA.